Consider the following 872-residue polypeptide: Alanine--tRNA ligase (872 aa).

The Zn(2+) site is built by His567, His571, Cys669, and His673.

It belongs to the class-II aminoacyl-tRNA synthetase family. Zn(2+) serves as cofactor.

Its subcellular location is the cytoplasm. The catalysed reaction is tRNA(Ala) + L-alanine + ATP = L-alanyl-tRNA(Ala) + AMP + diphosphate. Functionally, catalyzes the attachment of alanine to tRNA(Ala) in a two-step reaction: alanine is first activated by ATP to form Ala-AMP and then transferred to the acceptor end of tRNA(Ala). Also edits incorrectly charged Ser-tRNA(Ala) and Gly-tRNA(Ala) via its editing domain. The sequence is that of Alanine--tRNA ligase from Streptococcus pyogenes serotype M5 (strain Manfredo).